The chain runs to 260 residues: Thiamine thiazole synthase (260 aa).

NAD(+)-binding positions include A36, 55–56 (EQ), G63, and 154–156 (HVD). Fe cation contacts are provided by D156 and H171. M224 lines the NAD(+) pocket. Residue R234 coordinates glycine.

Belongs to the THI4 family. In terms of assembly, homooctamer; tetramer of dimers. Fe(2+) is required as a cofactor.

It carries out the reaction hydrogen sulfide + glycine + NAD(+) = ADP-5-ethyl-4-methylthiazole-2-carboxylate + nicotinamide + 3 H2O + H(+). It functions in the pathway cofactor biosynthesis; thiamine diphosphate biosynthesis. Involved in the biosynthesis of the thiazole moiety of thiamine. Catalyzes the conversion of NAD and glycine to adenosine diphosphate 5-(2-hydroxyethyl)-4-methylthiazole-2-carboxylate (ADT), an adenylated thiazole intermediate, using free sulfide as a source of sulfur. The chain is Thiamine thiazole synthase from Methanosarcina acetivorans (strain ATCC 35395 / DSM 2834 / JCM 12185 / C2A).